A 495-amino-acid polypeptide reads, in one-letter code: UDP-glycosyltransferase 73C13 (495 aa).

Residue His24 is the Proton acceptor of the active site. His24 serves as a coordination point for an anthocyanidin. Asp129 functions as the Charge relay in the catalytic mechanism. The UDP-alpha-D-glucose site is built by Ala356, Gln358, His373, Trp376, Asn377, Ser378, and Glu381. An an anthocyanidin-binding site is contributed by Ala396. UDP-alpha-D-glucose-binding residues include Asp397 and Gln398.

This sequence belongs to the UDP-glycosyltransferase family.

The catalysed reaction is oleanolate + UDP-alpha-D-glucose = oleanolate 3-O-beta-D-glucoside + UDP + H(+). Its function is as follows. Catalyzes the transfer of a glucose (Glc) moiety from UDP-Glc to the C-3 position of the oleanane sapogenins oleanolate and hederagenin, and to the C-28 carboxylic group of the lupane sapogenin betulinate. The monoglucosylated hederagenin 3-O-beta-D-glucoside is a feeding deterrent of the yellow-striped flea beetle (Phyllotreta nemorum). This chain is UDP-glycosyltransferase 73C13, found in Barbarea vulgaris (Yellow rocket).